The sequence spans 463 residues: ATP-dependent protease ATPase subunit HslU (463 aa).

ATP-binding positions include I19, G61–E66, D277, E341, and R413.

The protein belongs to the ClpX chaperone family. HslU subfamily. A double ring-shaped homohexamer of HslV is capped on each side by a ring-shaped HslU homohexamer. The assembly of the HslU/HslV complex is dependent on binding of ATP.

It is found in the cytoplasm. Its function is as follows. ATPase subunit of a proteasome-like degradation complex; this subunit has chaperone activity. The binding of ATP and its subsequent hydrolysis by HslU are essential for unfolding of protein substrates subsequently hydrolyzed by HslV. HslU recognizes the N-terminal part of its protein substrates and unfolds these before they are guided to HslV for hydrolysis. This is ATP-dependent protease ATPase subunit HslU from Bacillus cytotoxicus (strain DSM 22905 / CIP 110041 / 391-98 / NVH 391-98).